Reading from the N-terminus, the 236-residue chain is Sugar fermentation stimulation protein homolog (236 aa).

It belongs to the SfsA family.

The chain is Sugar fermentation stimulation protein homolog from Desulfotalea psychrophila (strain LSv54 / DSM 12343).